The following is a 244-amino-acid chain: 3-oxoacyl-[acyl-carrier-protein] reductase FabG (244 aa).

NADP(+) contacts are provided by residues 12–15 (GASR) and T37. Ca(2+) contacts are provided by G50 and G53. Residues 59 to 60 (NV) and N86 contribute to the NADP(+) site. Substrate is bound at residue S138. Residue N145 coordinates Ca(2+). Y151 functions as the Proton acceptor in the catalytic mechanism. Residues 151-155 (YAAAK) and I184 contribute to the NADP(+) site. 2 residues coordinate Ca(2+): E233 and T234.

The protein belongs to the short-chain dehydrogenases/reductases (SDR) family. As to quaternary structure, homotetramer.

The catalysed reaction is a (3R)-hydroxyacyl-[ACP] + NADP(+) = a 3-oxoacyl-[ACP] + NADPH + H(+). The protein operates within lipid metabolism; fatty acid biosynthesis. In terms of biological role, catalyzes the NADPH-dependent reduction of beta-ketoacyl-ACP substrates to beta-hydroxyacyl-ACP products, the first reductive step in the elongation cycle of fatty acid biosynthesis. The chain is 3-oxoacyl-[acyl-carrier-protein] reductase FabG (fabG) from Salmonella typhi.